A 620-amino-acid polypeptide reads, in one-letter code: Threonine--tRNA ligase (620 aa).

An editing domain region spans residues 1–141 (MKMLLIHSDY…LSRKIVAKEE (141 aa)). The tract at residues 197–496 (PHVKFIKEKD…AEKGNAPMLP (300 aa)) is catalytic. Cys-289, His-341, and His-465 together coordinate Zn(2+).

It belongs to the class-II aminoacyl-tRNA synthetase family. As to quaternary structure, homodimer. The cofactor is Zn(2+).

The protein localises to the cytoplasm. It catalyses the reaction tRNA(Thr) + L-threonine + ATP = L-threonyl-tRNA(Thr) + AMP + diphosphate + H(+). Not inhibited by 1 uM borrelidin (BN); probably does not bind BN. In terms of biological role, catalyzes the attachment of threonine to tRNA(Thr) in a two-step reaction: L-threonine is first activated by ATP to form Thr-AMP and then transferred to the acceptor end of tRNA(Thr). Also activates L-serine, but does not detectably transfer it to tRNA(Thr). Edits incorrectly charged L-seryl-tRNA(Thr) via its editing domain. Has no activity on correctly acylated L-seryl-tRNA(Ser) or L-threonyl-tRNA(Thr). Deacylates correctly charged glycyl-tRNA(Gly), but not glycyl-tRNA(Gly)(2'-dA76) (the terminal 2'-OH of tRNA adenine 76 has been dehydroxylated) nor the 2'-fluoro tRNA derivative, strongly suggesting the editing function is tRNA catalyzed. This chain is Threonine--tRNA ligase, found in Methanocaldococcus jannaschii (strain ATCC 43067 / DSM 2661 / JAL-1 / JCM 10045 / NBRC 100440) (Methanococcus jannaschii).